The sequence spans 179 residues: Bifunctional protein PyrR (179 aa).

Positions 99–111 match the PRPP-binding motif; that stretch reads VILVDDVLYTGRT.

The protein belongs to the purine/pyrimidine phosphoribosyltransferase family. PyrR subfamily. In terms of assembly, homodimer and homohexamer; in equilibrium.

The enzyme catalyses UMP + diphosphate = 5-phospho-alpha-D-ribose 1-diphosphate + uracil. Regulates transcriptional attenuation of the pyrimidine nucleotide (pyr) operon by binding in a uridine-dependent manner to specific sites on pyr mRNA. This disrupts an antiterminator hairpin in the RNA and favors formation of a downstream transcription terminator, leading to a reduced expression of downstream genes. Functionally, also displays a weak uracil phosphoribosyltransferase activity which is not physiologically significant. The polypeptide is Bifunctional protein PyrR (Brevibacillus brevis (strain 47 / JCM 6285 / NBRC 100599)).